The following is a 582-amino-acid chain: Inositol transporter 4 (582 aa).

Transmembrane regions (helical) follow at residues 35–55 (GIGG…LLFI), 70–90 (STIV…GGWI), 105–125 (VLFL…VIIV), 128–148 (IFVG…ISEA), 162–182 (GLLI…FVHT), 188–208 (WMLG…LSLP), 290–310 (FVGI…AGYA), 317–337 (ALSL…MMFV), 345–365 (LMII…TVFS), 456–476 (FGFL…PGMG), 494–514 (LGGG…SESF), and 525–545 (GTFL…WLLV).

This sequence belongs to the major facilitator superfamily. Sugar transporter (TC 2.A.1.1) family. Highly expressed in pollen and phloem companion cells.

It localises to the cell membrane. In terms of biological role, plasma membrane inositol-proton symporter. Mediates high-affinity myoinositol-proton symport across the plasma membrane. Active with myoinositol, scylloinositol and D-chiroinositol. Low activity with mucoinositol and alloinositol. The chain is Inositol transporter 4 (INT4) from Arabidopsis thaliana (Mouse-ear cress).